A 546-amino-acid chain; its full sequence is MAAKDVVFGGEARARMVEGVNILANAVKVTLGPKGRNVVLERSFGAPTVTKDGVSVAKEIELKDKLQNMGAQLVKEVASKTNDIAGDGTTTATVLAQAIVREGSKYVAAGLNPMDLKRGIDKAVVALVEELKKASKATTTSKEIAQVGSISANSDESVGKIIADAMDKVGKEGVITVEDGKSLENELEVVEGMQFDRGYLSPYFINNPEKQAAILDNPFVLLFDKKISNIRDLLPTLEQVAKASRPLLIIAEDVEGEALATLVVNTIRGILKVVAVKAPGFGDRRKAMLEDIAILTGGKVIAEEVGLTLEKVTLADLGQAKRIEVGKENTTIIDGAGAAADIEARVKQIRIQIEEATSDYDREKLQERVAKLAGGVAVIKVGAATEVEMKEKKARVEDALHATRAAVEEGIVAGGGVALLRAKQAVGNLSTGNPEQDAGIKLVLKAVEAPLREIVANAGGEPSVVVNEVLNGKGNYGFNAANDTYGDMLEMGILDPTKVTRTALQNAASVASLLLTTEAMVAEAPKDESAAPAMPGGMGGMGDMGM.

ATP contacts are provided by residues 30–33 (TLGP), Lys51, 87–91 (DGTTT), Gly415, 479–481 (NAA), and Asp495. The disordered stretch occupies residues 527–546 (DESAAPAMPGGMGGMGDMGM). Positions 536 to 546 (GGMGGMGDMGM) are enriched in gly residues.

It belongs to the chaperonin (HSP60) family. As to quaternary structure, forms a cylinder of 14 subunits composed of two heptameric rings stacked back-to-back. Interacts with the co-chaperonin GroES.

It is found in the cytoplasm. The catalysed reaction is ATP + H2O + a folded polypeptide = ADP + phosphate + an unfolded polypeptide.. Together with its co-chaperonin GroES, plays an essential role in assisting protein folding. The GroEL-GroES system forms a nano-cage that allows encapsulation of the non-native substrate proteins and provides a physical environment optimized to promote and accelerate protein folding. The protein is Chaperonin GroEL of Acidovorax sp. (strain JS42).